The primary structure comprises 1085 residues: Tudor domain-containing protein 7B (1085 aa).

An HTH OST-type 1 domain is found at 3 to 76; the sequence is DEELVKKMVR…SGEVMCHATT (74 aa). Disordered regions lie at residues 112–183, 200–228, and 297–341; these read APLV…PEKR, RNPQ…SAPY, and PAKE…KALS. A compositionally biased stretch (polar residues) spans 203-216; that stretch reads QHINVPSNLNENTT. The HTH OST-type 2 domain maps to 229–299; sequence SPKLVQSRLQ…PQELLLYPAK (71 aa). Polar residues predominate over residues 322–335; it reads TQRPSLTAKSNTPE. An HTH OST-type 3 domain is found at 340 to 410; the sequence is LSPDLKQKLG…PKRAILYAKV (71 aa). 2 Tudor domains span residues 496 to 554 and 686 to 743; these read SPSP…FYRL and RPFC…LLRD. Residues 843 to 853 show a composition bias toward polar residues; sequence NVPTATQTSSL. Residues 843–888 form a disordered region; that stretch reads NVPTATQTSSLKTDRGDKALHTPKKTSPPLGSKSTPAGSPPERLSL.

The protein localises to the cytoplasm. Functionally, component of specific cytoplasmic RNA granules involved in post-transcriptional regulation of specific genes: probably acts by binding to specific mRNAs and regulating their translation. Probably required during spermatogenesis. The sequence is that of Tudor domain-containing protein 7B (tdrd7b) from Danio rerio (Zebrafish).